The chain runs to 209 residues: Outer-membrane lipoprotein carrier protein (209 aa).

Positions 1 to 21 (MHRQLRYAVLATALFASTAFA) are cleaved as a signal peptide.

Belongs to the LolA family. In terms of assembly, monomer.

The protein localises to the periplasm. Participates in the translocation of lipoproteins from the inner membrane to the outer membrane. Only forms a complex with a lipoprotein if the residue after the N-terminal Cys is not an aspartate (The Asp acts as a targeting signal to indicate that the lipoprotein should stay in the inner membrane). The polypeptide is Outer-membrane lipoprotein carrier protein (Xanthomonas oryzae pv. oryzae (strain MAFF 311018)).